The sequence spans 79 residues: Metallothionein-like protein type 2 (79 aa).

This sequence belongs to the metallothionein superfamily. Type 15 family.

Metallothioneins have a high content of cysteine residues that bind various heavy metals. The sequence is that of Metallothionein-like protein type 2 (MT1) from Malus domestica (Apple).